A 402-amino-acid polypeptide reads, in one-letter code: Protein rds1 (402 aa).

Its function is as follows. May have a function in stress-related responses of the cell. The sequence is that of Protein rds1 (rds1) from Schizosaccharomyces pombe (strain 972 / ATCC 24843) (Fission yeast).